The chain runs to 294 residues: ATP synthase gamma chain (294 aa).

The protein belongs to the ATPase gamma chain family. In terms of assembly, F-type ATPases have 2 components, CF(1) - the catalytic core - and CF(0) - the membrane proton channel. CF(1) has five subunits: alpha(3), beta(3), gamma(1), delta(1), epsilon(1). CF(0) has three main subunits: a, b and c.

It localises to the cell inner membrane. In terms of biological role, produces ATP from ADP in the presence of a proton gradient across the membrane. The gamma chain is believed to be important in regulating ATPase activity and the flow of protons through the CF(0) complex. The sequence is that of ATP synthase gamma chain from Parvibaculum lavamentivorans (strain DS-1 / DSM 13023 / NCIMB 13966).